The primary structure comprises 91 residues: MFPLSLLQPSHSPLCPCSQPALTLFGQLEDKNLGDNDLERRMQSVNEVCQLLFQDMDISRIRDQIRQPGAPESEGTSPNTGKDGKDPGNSL.

The interval 62 to 91 (RDQIRQPGAPESEGTSPNTGKDGKDPGNSL) is disordered. Residues 82 to 91 (KDGKDPGNSL) are compositionally biased toward basic and acidic residues.

Belongs to the small heat shock protein (HSP20) family.

The sequence is that of Heat shock protein 30E (hsp30e) from Xenopus laevis (African clawed frog).